We begin with the raw amino-acid sequence, 114 residues long: Probable acid stress chaperone HdeA (114 aa).

An N-terminal signal peptide occupies residues 1–26; that stretch reads MIKTLFNKNTALAAVAILALSGSAMA. Cysteine 46 and cysteine 94 are oxidised to a cystine.

It belongs to the HdeA family.

It is found in the periplasm. Functionally, required for optimal acid stress protection. Exhibits a chaperone-like activity only at low pH by suppressing non-specifically the aggregation of denaturated periplasmic proteins. This Brucella ovis (strain ATCC 25840 / 63/290 / NCTC 10512) protein is Probable acid stress chaperone HdeA.